A 69-amino-acid polypeptide reads, in one-letter code: Beta-defensin 122 (69 aa).

The N-terminal stretch at 1–19 (MKPFLVTLAVLLLFFQVTA) is a signal peptide. Disulfide bonds link Cys-26/Cys-53, Cys-33/Cys-47, and Cys-37/Cys-54.

This sequence belongs to the beta-defensin family.

Its subcellular location is the secreted. Functionally, has antibacterial activity. This Macaca mulatta (Rhesus macaque) protein is Beta-defensin 122 (DEFB122).